The chain runs to 266 residues: Thymidylate synthase (266 aa).

Arg-24 is a binding site for dUMP. Residue His-54 participates in (6R)-5,10-methylene-5,6,7,8-tetrahydrofolate binding. 129-130 (RR) is a dUMP binding site. Cys-149 functions as the Nucleophile in the catalytic mechanism. Residues 169–172 (RSAD), Asn-180, and 210–212 (HIY) contribute to the dUMP site. Asp-172 contributes to the (6R)-5,10-methylene-5,6,7,8-tetrahydrofolate binding site. Ala-265 lines the (6R)-5,10-methylene-5,6,7,8-tetrahydrofolate pocket.

Belongs to the thymidylate synthase family. Bacterial-type ThyA subfamily. In terms of assembly, homodimer.

Its subcellular location is the cytoplasm. It catalyses the reaction dUMP + (6R)-5,10-methylene-5,6,7,8-tetrahydrofolate = 7,8-dihydrofolate + dTMP. It functions in the pathway pyrimidine metabolism; dTTP biosynthesis. Its function is as follows. Catalyzes the reductive methylation of 2'-deoxyuridine-5'-monophosphate (dUMP) to 2'-deoxythymidine-5'-monophosphate (dTMP) while utilizing 5,10-methylenetetrahydrofolate (mTHF) as the methyl donor and reductant in the reaction, yielding dihydrofolate (DHF) as a by-product. This enzymatic reaction provides an intracellular de novo source of dTMP, an essential precursor for DNA biosynthesis. The polypeptide is Thymidylate synthase (Mycobacterium bovis (strain ATCC BAA-935 / AF2122/97)).